The primary structure comprises 269 residues: Ice-binding protein (269 aa).

The signal sequence occupies residues 1 to 24 (MLKINRKYAIILAIVAFSSFQTEA). 7 short sequence motifs (probable ice-binding motif (T/S-X-T)) span residues 45–47 (TVT), 65–67 (SAT), 128–130 (SAQ), 154–156 (TLT), 180–182 (SAT), 198–200 (SIT), and 218–220 (AVT). The PEP C-terminal anchor stretch occupies residues 240–263 (VPEPDSSLAVLGSGLVSLLFAFRK). Residues 245 to 261 (SSLAVLGSGLVSLLFAF) form a helical membrane-spanning segment.

This sequence belongs to the ice-binding protein family.

The protein resides in the cell outer membrane. Its function is as follows. A probable ice-binding protein that has ice-structuring activities in vitro. Thought not to anchor the cyanobacterium to ice surfaces, as its habitat is shallow puddles fed by glacier meltwater. The protein is Ice-binding protein of Nostoc sp. (strain HG1).